Reading from the N-terminus, the 317-residue chain is Petrobactin-binding protein YclQ (317 aa).

The first 19 residues, 1–19, serve as a signal peptide directing secretion; the sequence is MKKFALLFIALVTAVVISA. Residue cysteine 20 is the site of N-palmitoyl cysteine attachment. The S-diacylglycerol cysteine moiety is linked to residue cysteine 20. The Fe/B12 periplasmic-binding domain maps to 56 to 317; sequence KVVVFDFGSL…IKEVKDGLEK (262 aa).

This sequence belongs to the bacterial solute-binding protein 8 family. The complex is composed of two ATP-binding proteins (YclP), two transmembrane proteins (YclN and YclO) and a solute-binding protein (YclQ). Interacts with FloT.

Its subcellular location is the cell membrane. It is found in the membrane raft. Its function is as follows. Part of the ABC transporter complex YclNOPQ involved in uptake of ferric-petrobactin. Petrobactin is a photoreactive 3,4-catecholate siderophore produced by many members of the B.cereus group, including B.anthracis. Binds selectively iron-free and ferric petrobactin and the petrobactin precursor 3,4-dihydroxybenzoic acid (3,4-DHB). This chain is Petrobactin-binding protein YclQ (yclQ), found in Bacillus subtilis (strain 168).